Here is a 652-residue protein sequence, read N- to C-terminus: DNA ligase (652 aa).

NAD(+) is bound by residues 29 to 33 (DSEYD), 78 to 79 (SL), and glutamate 107. The active-site N6-AMP-lysine intermediate is lysine 109. The NAD(+) site is built by arginine 130, glutamate 164, lysine 278, and lysine 302. Cysteine 395, cysteine 398, cysteine 413, and cysteine 418 together coordinate Zn(2+). The 76-residue stretch at 577-652 (DQQAALFGLT…IEDEDWLLNL (76 aa)) folds into the BRCT domain.

It belongs to the NAD-dependent DNA ligase family. LigA subfamily. Requires Mg(2+) as cofactor. The cofactor is Mn(2+).

It catalyses the reaction NAD(+) + (deoxyribonucleotide)n-3'-hydroxyl + 5'-phospho-(deoxyribonucleotide)m = (deoxyribonucleotide)n+m + AMP + beta-nicotinamide D-nucleotide.. DNA ligase that catalyzes the formation of phosphodiester linkages between 5'-phosphoryl and 3'-hydroxyl groups in double-stranded DNA using NAD as a coenzyme and as the energy source for the reaction. It is essential for DNA replication and repair of damaged DNA. This Streptococcus equi subsp. equi (strain 4047) protein is DNA ligase.